Reading from the N-terminus, the 65-residue chain is Large ribosomal subunit protein uL29 (65 aa).

This sequence belongs to the universal ribosomal protein uL29 family.

The polypeptide is Large ribosomal subunit protein uL29 (Bacteroides fragilis (strain ATCC 25285 / DSM 2151 / CCUG 4856 / JCM 11019 / LMG 10263 / NCTC 9343 / Onslow / VPI 2553 / EN-2)).